The sequence spans 102 residues: Small ribosomal subunit protein uS10 (102 aa).

This sequence belongs to the universal ribosomal protein uS10 family. In terms of assembly, part of the 30S ribosomal subunit.

In terms of biological role, involved in the binding of tRNA to the ribosomes. This is Small ribosomal subunit protein uS10 from Clostridium novyi (strain NT).